Reading from the N-terminus, the 472-residue chain is Siroheme synthase 1 (472 aa).

A precorrin-2 dehydrogenase /sirohydrochlorin ferrochelatase region spans residues 1–203 (MDYLPLFADL…GQLTEAENEL (203 aa)). NAD(+) contacts are provided by residues 22–23 (EV) and 43–44 (QT). Serine 128 carries the phosphoserine modification. Residues 215–472 (GEVALVGAGP…AISPSVVNLA (258 aa)) form a uroporphyrinogen-III C-methyltransferase region. Proline 224 lines the S-adenosyl-L-methionine pocket. Aspartate 247 functions as the Proton acceptor in the catalytic mechanism. Lysine 269 serves as the catalytic Proton donor. S-adenosyl-L-methionine is bound by residues 300–302 (GGD), isoleucine 305, 330–331 (TA), methionine 382, and glycine 411.

In the N-terminal section; belongs to the precorrin-2 dehydrogenase / sirohydrochlorin ferrochelatase family. It in the C-terminal section; belongs to the precorrin methyltransferase family.

It catalyses the reaction uroporphyrinogen III + 2 S-adenosyl-L-methionine = precorrin-2 + 2 S-adenosyl-L-homocysteine + H(+). The catalysed reaction is precorrin-2 + NAD(+) = sirohydrochlorin + NADH + 2 H(+). It carries out the reaction siroheme + 2 H(+) = sirohydrochlorin + Fe(2+). Its pathway is cofactor biosynthesis; adenosylcobalamin biosynthesis; precorrin-2 from uroporphyrinogen III: step 1/1. The protein operates within cofactor biosynthesis; adenosylcobalamin biosynthesis; sirohydrochlorin from precorrin-2: step 1/1. It functions in the pathway porphyrin-containing compound metabolism; siroheme biosynthesis; precorrin-2 from uroporphyrinogen III: step 1/1. It participates in porphyrin-containing compound metabolism; siroheme biosynthesis; siroheme from sirohydrochlorin: step 1/1. Its pathway is porphyrin-containing compound metabolism; siroheme biosynthesis; sirohydrochlorin from precorrin-2: step 1/1. Functionally, multifunctional enzyme that catalyzes the SAM-dependent methylations of uroporphyrinogen III at position C-2 and C-7 to form precorrin-2 via precorrin-1. Then it catalyzes the NAD-dependent ring dehydrogenation of precorrin-2 to yield sirohydrochlorin. Finally, it catalyzes the ferrochelation of sirohydrochlorin to yield siroheme. The polypeptide is Siroheme synthase 1 (Yersinia pestis bv. Antiqua (strain Nepal516)).